The sequence spans 312 residues: Acetaldehyde dehydrogenase 2 (312 aa).

Ser11 to Ile14 is a binding site for NAD(+). The active-site Acyl-thioester intermediate is Cys129. NAD(+) is bound by residues Ser160–Asn168 and Asn287.

This sequence belongs to the acetaldehyde dehydrogenase family.

It catalyses the reaction acetaldehyde + NAD(+) + CoA = acetyl-CoA + NADH + H(+). The sequence is that of Acetaldehyde dehydrogenase 2 from Novosphingobium aromaticivorans (strain ATCC 700278 / DSM 12444 / CCUG 56034 / CIP 105152 / NBRC 16084 / F199).